The chain runs to 121 residues: Non-structural protein 8 (121 aa).

An N-terminal signal peptide occupies residues Met-1 to Cys-15. One can recognise an SARS ORF8 Ig-like domain in the interval Glu-19 to Val-121. 3 cysteine pairs are disulfide-bonded: Cys-25–Cys-90, Cys-37–Cys-102, and Cys-61–Cys-83.

This is Non-structural protein 8 from Bat coronavirus Rp3/2004 (BtCoV/Rp3/2004).